A 258-amino-acid chain; its full sequence is Small ribosomal subunit protein uS3 (258 aa).

The region spanning isoleucine 43–lysine 111 is the KH type-2 domain. A disordered region spans residues alanine 217 to alanine 258. Over residues glycine 229–glycine 241 the composition is skewed to basic and acidic residues. Residues alanine 242–alanine 258 show a composition bias toward low complexity.

This sequence belongs to the universal ribosomal protein uS3 family. As to quaternary structure, part of the 30S ribosomal subunit. Forms a tight complex with proteins S10 and S14.

In terms of biological role, binds the lower part of the 30S subunit head. Binds mRNA in the 70S ribosome, positioning it for translation. In Beutenbergia cavernae (strain ATCC BAA-8 / DSM 12333 / CCUG 43141 / JCM 11478 / NBRC 16432 / NCIMB 13614 / HKI 0122), this protein is Small ribosomal subunit protein uS3.